The primary structure comprises 359 residues: Peptide chain release factor 1 (359 aa).

N5-methylglutamine is present on Gln235. The segment at 287-312 is disordered; sequence AQEASAMRSAQVGSGDRSERIRTYNF.

Belongs to the prokaryotic/mitochondrial release factor family. Post-translationally, methylated by PrmC. Methylation increases the termination efficiency of RF1.

The protein resides in the cytoplasm. Peptide chain release factor 1 directs the termination of translation in response to the peptide chain termination codons UAG and UAA. This Chlamydia trachomatis serovar A (strain ATCC VR-571B / DSM 19440 / HAR-13) protein is Peptide chain release factor 1.